A 1827-amino-acid polypeptide reads, in one-letter code: Chromodomain-helicase-DNA-binding protein 2 (1827 aa).

Over residues 1–14 the composition is skewed to basic and acidic residues; that stretch reads MMRNKDKSQEEDSS. The interval 1-264 is disordered; the sequence is MMRNKDKSQE…EQQDNSETIE (264 aa). Residues 15-75 are compositionally biased toward low complexity; sequence LHSNASSRSA…SESESAGSKS (61 aa). Composition is skewed to basic and acidic residues over residues 81–101, 115–128, and 146–155; these read EAKE…KMWE, SRQE…KEEA, and KKQEKWKQDP. Residues 175–204 are compositionally biased toward basic residues; it reads GKARRPVPRRTVPKPQVKKQPKIQRGKRKK. Phosphoserine occurs at positions 207 and 208. A compositionally biased stretch (acidic residues) spans 234-258; it reads EDDDFETDSDDLIEMTGEGGDEQQD. At Thr-240 the chain carries Phosphothreonine. At Ser-242 the chain carries Phosphoserine. Chromo domains lie at 261–353 and 378–456; these read ETIE…QWLG and QIVE…IPTR. The region spanning 496–666 is the Helicase ATP-binding domain; the sequence is AHSWCKSNSV…WSLLHFIMPE (171 aa). 509 to 516 provides a ligand contact to ATP; the sequence is DEMGLGKT. Residues 617–620 carry the DEAH box motif; sequence DEAH. One can recognise a Helicase C-terminal domain in the interval 795-946; it reads LLDKLLTRLR…HLVIQRMDTT (152 aa). Disordered stretches follow at residues 1030 to 1124, 1329 to 1465, 1556 to 1638, and 1679 to 1827; these read EDEE…RSVR, GTVA…DDLD, HKKR…ADRG, and HMDA…VRKT. Residues 1037 to 1065 show a composition bias toward basic and acidic residues; sequence ERPHKDWDEIIPEEQRKKVEEEERQKELE. 4 positions are modified to phosphoserine: Ser-1085, Ser-1087, Ser-1365, and Ser-1386. Residues 1347 to 1371 show a composition bias toward basic and acidic residues; sequence KKENKAPRLKDEHGLEPASPRHSDN. 2 stretches are compositionally biased toward basic and acidic residues: residues 1396 to 1431 and 1565 to 1574; these read ENKE…KGGD and EQKKKDDSLG. Residues 1464 to 1566 form a CHD1 helical C-terminal domain (CHCT) region; the sequence is LDQETFSICK…KKRSQEEEEQ (103 aa). Residues 1584–1601 are compositionally biased toward polar residues; sequence SGSSRDSLISQSHTSHNL. 4 stretches are compositionally biased toward basic and acidic residues: residues 1697 to 1719, 1738 to 1748, 1759 to 1771, and 1794 to 1813; these read RPYE…DRHH, QDFRRMSDHRP, DHYR…KLGE, and SPHD…RSLE. Ser-1806 bears the Phosphoserine mark.

Interacts with MYOD1. Interacts with histone H3.3. As to expression, widely expressed.

The protein resides in the nucleus. The catalysed reaction is ATP + H2O = ADP + phosphate + H(+). Functionally, ATP-dependent chromatin-remodeling factor that specifically binds to the promoter of target genes, leading to chromatin remodeling, possibly by promoting deposition of histone H3.3. Involved in myogenesis via interaction with MYOD1: binds to myogenic gene regulatory sequences and mediates incorporation of histone H3.3 prior to the onset of myogenic gene expression, promoting their expression. The polypeptide is Chromodomain-helicase-DNA-binding protein 2 (Chd2) (Mus musculus (Mouse)).